The chain runs to 292 residues: 2-(5''-triphosphoribosyl)-3'-dephosphocoenzyme-A synthase (292 aa).

The protein belongs to the CitG/MdcB family.

It carries out the reaction 3'-dephospho-CoA + ATP = 2'-(5''-triphospho-alpha-D-ribosyl)-3'-dephospho-CoA + adenine. Its function is as follows. Catalyzes the formation of 2-(5''-triphosphoribosyl)-3'-dephosphocoenzyme-A, the precursor of the prosthetic group of the holo-acyl carrier protein (gamma chain) of citrate lyase, from ATP and dephospho-CoA. The polypeptide is 2-(5''-triphosphoribosyl)-3'-dephosphocoenzyme-A synthase (Escherichia coli O17:K52:H18 (strain UMN026 / ExPEC)).